Consider the following 153-residue polypeptide: Ribosomal RNA large subunit methyltransferase H (153 aa).

Residues Leu-70, Gly-102, and Leu-121–Phe-126 contribute to the S-adenosyl-L-methionine site.

It belongs to the RNA methyltransferase RlmH family. As to quaternary structure, homodimer.

It is found in the cytoplasm. It catalyses the reaction pseudouridine(1915) in 23S rRNA + S-adenosyl-L-methionine = N(3)-methylpseudouridine(1915) in 23S rRNA + S-adenosyl-L-homocysteine + H(+). Its function is as follows. Specifically methylates the pseudouridine at position 1915 (m3Psi1915) in 23S rRNA. In Trichlorobacter lovleyi (strain ATCC BAA-1151 / DSM 17278 / SZ) (Geobacter lovleyi), this protein is Ribosomal RNA large subunit methyltransferase H.